The following is a 219-amino-acid chain: Inner membrane protein YghB (219 aa).

Residues 1–17 (MAVIQDIIAALWQHDFA) lie on the Cytoplasmic side of the membrane. A helical membrane pass occupies residues 18 to 38 (ALANPHVVSVVYFVMFATLFL). The Periplasmic portion of the chain corresponds to 39–67 (ENGLLPASFLPGDSLLLLAGALIAQDVMH). Residues 68–88 (FLPTIGILTAAASLGCWLSYI) traverse the membrane as a helical segment. The Cytoplasmic segment spans residues 89–160 (QGRWLGNTRT…RRFQFFNWLS (72 aa)). The helical transmembrane segment at 161–181 (GLLWVTVVTSFGYALSMIPFV) threads the bilayer. Residues 182-191 (KRHEDQVMTF) lie on the Periplasmic side of the membrane. Residues 192–212 (LMILPVALLVAGLLGTLVVVI) traverse the membrane as a helical segment. At 213 to 219 (KKKYCNA) the chain is on the cytoplasmic side.

This sequence belongs to the DedA family.

The protein localises to the cell inner membrane. The sequence is that of Inner membrane protein YghB (yghB) from Salmonella typhimurium (strain LT2 / SGSC1412 / ATCC 700720).